Reading from the N-terminus, the 150-residue chain is Nucleoside diphosphate kinase (150 aa).

ATP-binding residues include Lys-9, Phe-57, Arg-85, Thr-91, Arg-102, and Asn-112. His-115 (pros-phosphohistidine intermediate) is an active-site residue.

Belongs to the NDK family. Mg(2+) serves as cofactor.

It is found in the cytoplasm. It carries out the reaction a 2'-deoxyribonucleoside 5'-diphosphate + ATP = a 2'-deoxyribonucleoside 5'-triphosphate + ADP. The catalysed reaction is a ribonucleoside 5'-diphosphate + ATP = a ribonucleoside 5'-triphosphate + ADP. In terms of biological role, major role in the synthesis of nucleoside triphosphates other than ATP. The ATP gamma phosphate is transferred to the NDP beta phosphate via a ping-pong mechanism, using a phosphorylated active-site intermediate. In Methanoregula boonei (strain DSM 21154 / JCM 14090 / 6A8), this protein is Nucleoside diphosphate kinase.